The primary structure comprises 366 residues: Ferredoxin--NADP reductase (366 aa).

Positions 51, 59, 64, 104, 139, 308, and 349 each coordinate FAD.

It belongs to the ferredoxin--NADP reductase type 2 family. As to quaternary structure, homodimer. It depends on FAD as a cofactor.

The catalysed reaction is 2 reduced [2Fe-2S]-[ferredoxin] + NADP(+) + H(+) = 2 oxidized [2Fe-2S]-[ferredoxin] + NADPH. This chain is Ferredoxin--NADP reductase, found in Polaromonas sp. (strain JS666 / ATCC BAA-500).